Reading from the N-terminus, the 469-residue chain is Cysteine--tRNA ligase (469 aa).

Residue cysteine 28 coordinates Zn(2+). A 'HIGH' region motif is present at residues 30–40 (PTVYNYIHIGN). Zn(2+) contacts are provided by cysteine 213, histidine 238, and glutamate 242. A 'KMSKS' region motif is present at residues 270–274 (KMSKS). Residue lysine 273 coordinates ATP.

Belongs to the class-I aminoacyl-tRNA synthetase family. Monomer. Zn(2+) serves as cofactor.

It is found in the cytoplasm. The enzyme catalyses tRNA(Cys) + L-cysteine + ATP = L-cysteinyl-tRNA(Cys) + AMP + diphosphate. This chain is Cysteine--tRNA ligase, found in Leuconostoc citreum (strain KM20).